The sequence spans 355 residues: MTAAPLTPDPTHPRRRRKSYTFFSLGIYAEALLFLLSSLSDACEPPPPFEAMELKDKPKPHYAIGEIIEYTCKKGYLYLSPYPMTAICQPNHTWVPISDHGCIKVQCTMLQDPSFGKVHYIDGRFSWGARVKYTCMNGYYMVGMSVLQCELNGNGDAFWNGHPPSCKKVYCLPPPKIKNGTHTFTDIKVFKYHEAVIYSCDPNPGPDKFSLVGPSMLFCAGHNTWSSDPPECKVVKCPFPVLQNGRQISRTEKKFSYQALVLFQCLEGFYMEGSSMVVCGAKSSWEPSIPQCLKGPKPHSTKPPVYSESGYPSPREGIFGQEFDAWIIALIVVTSVVGVIVICLIILRCSEYRKK.

The signal sequence occupies residues 1–42; the sequence is MTAAPLTPDPTHPRRRRKSYTFFSLGIYAEALLFLLSSLSDA. Sushi domains lie at 43 to 104, 105 to 168, 169 to 234, and 235 to 294; these read CEPP…GCIK, VQCT…SCKK, VYCL…ECKV, and VKCP…QCLK. At 43-326 the chain is on the extracellular side; that stretch reads CEPPPPFEAM…GIFGQEFDAW (284 aa). Disulfide bonds link Cys107-Cys149, Cys135-Cys166, Cys171-Cys219, Cys200-Cys232, Cys237-Cys279, and Cys265-Cys292. Asn179 carries N-linked (GlcNAc...) asparagine glycosylation. An O-linked (GalNAc...) threonine glycan is attached at Thr301. A helical membrane pass occupies residues 327 to 347; sequence IIALIVVTSVVGVIVICLIIL. Topologically, residues 348–355 are cytoplasmic; that stretch reads RCSEYRKK.

As to quaternary structure, interacts with C3b. Interacts with C4b. Interacts with moesin/MSN. Post-translationally, O-glycosylated. In terms of processing, N-glycosylated. Specifically expressed in testis. Within testis, present only in elongated spermatids and spermatozoa (at protein level).

Its subcellular location is the cytoplasmic vesicle. It is found in the secretory vesicle. The protein localises to the acrosome inner membrane. In terms of biological role, may be involved in the fusion of the spermatozoa with the oocyte during fertilization. The polypeptide is Membrane cofactor protein (Cd46) (Rattus norvegicus (Rat)).